A 491-amino-acid chain; its full sequence is Tryptophan 5-hydroxylase 2 (491 aa).

Ser-19 is modified (phosphoserine). The tract at residues 33-63 is disordered; it reads NLTVNKSNSGKNDDKKGNKGSSRSETAPDSG. In terms of domain architecture, ACT spans 66-141; the sequence is AVVFSLRNEV…TIVTLNPPEN (76 aa). Residues His-319, His-324, and Glu-364 each coordinate Fe cation.

This sequence belongs to the biopterin-dependent aromatic amino acid hydroxylase family. Interacts with DNAJC12. Fe(2+) is required as a cofactor.

The enzyme catalyses (6R)-L-erythro-5,6,7,8-tetrahydrobiopterin + L-tryptophan + O2 = 5-hydroxy-L-tryptophan + (4aS,6R)-4a-hydroxy-L-erythro-5,6,7,8-tetrahydrobiopterin. It functions in the pathway aromatic compound metabolism; serotonin biosynthesis; serotonin from L-tryptophan: step 1/2. The sequence is that of Tryptophan 5-hydroxylase 2 (TPH2) from Equus caballus (Horse).